The sequence spans 748 residues: Malate synthase G (748 aa).

Residues Val-141, 148-149, Ser-298, and Arg-335 contribute to the acetyl-CoA site; that span reads RF. Catalysis depends on Arg-362, which acts as the Proton acceptor. Glyoxylate contacts are provided by residues Arg-362, Glu-453, and 478–481; that span reads GFLD. Residues Glu-453 and Asp-481 each coordinate Mg(2+). Acetyl-CoA is bound at residue Pro-562. At Cys-639 the chain carries Cysteine sulfenic acid (-SOH). Catalysis depends on Asp-653, which acts as the Proton donor.

This sequence belongs to the malate synthase family. GlcB subfamily. As to quaternary structure, monomer. It depends on Mg(2+) as a cofactor.

Its subcellular location is the cytoplasm. It carries out the reaction glyoxylate + acetyl-CoA + H2O = (S)-malate + CoA + H(+). It participates in carbohydrate metabolism; glyoxylate cycle; (S)-malate from isocitrate: step 2/2. Its function is as follows. Involved in the glycolate utilization. Catalyzes the condensation and subsequent hydrolysis of acetyl-coenzyme A (acetyl-CoA) and glyoxylate to form malate and CoA. In Corynebacterium efficiens (strain DSM 44549 / YS-314 / AJ 12310 / JCM 11189 / NBRC 100395), this protein is Malate synthase G.